We begin with the raw amino-acid sequence, 694 residues long: Polyphosphate kinase (694 aa).

Asn45 provides a ligand contact to ATP. Mg(2+)-binding residues include Arg367 and Arg397. His427 (phosphohistidine intermediate) is an active-site residue. ATP contacts are provided by Tyr460, Arg553, and His580.

Belongs to the polyphosphate kinase 1 (PPK1) family. Requires Mg(2+) as cofactor. An intermediate of this reaction is the autophosphorylated ppk in which a phosphate is covalently linked to a histidine residue through a N-P bond.

The enzyme catalyses [phosphate](n) + ATP = [phosphate](n+1) + ADP. Its function is as follows. Catalyzes the reversible transfer of the terminal phosphate of ATP to form a long-chain polyphosphate (polyP). This chain is Polyphosphate kinase, found in Campylobacter jejuni subsp. doylei (strain ATCC BAA-1458 / RM4099 / 269.97).